Consider the following 264-residue polypeptide: MKQYLDLMRHVREHGTFKSDRTGTGTYSVFGYQMRFDLAEGFPLVTTKKCHLKSIIHELLWFLQGDTNIKYLKENGVRIWDEWADENGELGPVYGYQWRSWPAPNGESIDQIANLLAMIKKNPDSRRLIVSAWNPALVEQMALPPCHALFQFYVADGKLSCQLYQRSADIFLGVPFNIASYALLTLMVAQVCDLEPGEFIWSGGDCHLYANHLEQADLQLTREPLPLPTMKLNPEVKDLFAFRFEDFELVGYEAHPHIKAPVAV.

A dUMP-binding site is contributed by arginine 21. Position 51 (histidine 51) interacts with (6R)-5,10-methylene-5,6,7,8-tetrahydrofolate. 126–127 (RR) is a binding site for dUMP. Cysteine 146 (nucleophile) is an active-site residue. DUMP-binding positions include 166–169 (RSAD), asparagine 177, and 207–209 (HLY). Residue aspartate 169 participates in (6R)-5,10-methylene-5,6,7,8-tetrahydrofolate binding. Residue alanine 263 participates in (6R)-5,10-methylene-5,6,7,8-tetrahydrofolate binding.

It belongs to the thymidylate synthase family. Bacterial-type ThyA subfamily. In terms of assembly, homodimer.

It localises to the cytoplasm. It carries out the reaction dUMP + (6R)-5,10-methylene-5,6,7,8-tetrahydrofolate = 7,8-dihydrofolate + dTMP. Its pathway is pyrimidine metabolism; dTTP biosynthesis. In terms of biological role, catalyzes the reductive methylation of 2'-deoxyuridine-5'-monophosphate (dUMP) to 2'-deoxythymidine-5'-monophosphate (dTMP) while utilizing 5,10-methylenetetrahydrofolate (mTHF) as the methyl donor and reductant in the reaction, yielding dihydrofolate (DHF) as a by-product. This enzymatic reaction provides an intracellular de novo source of dTMP, an essential precursor for DNA biosynthesis. In Stutzerimonas stutzeri (strain A1501) (Pseudomonas stutzeri), this protein is Thymidylate synthase.